Here is a 198-residue protein sequence, read N- to C-terminus: HTH-type transcriptional repressor DhaR (198 aa).

Residues 4 to 64 enclose the HTH tetR-type domain; it reads TPVRQHLVEK…QVLQEFFSDL (61 aa).

Its function is as follows. Transcriptional repressor for the dhaA haloalkane dehalogenase gene. This is HTH-type transcriptional repressor DhaR (dhaR) from Mycobacterium sp. (strain GP1).